We begin with the raw amino-acid sequence, 117 residues long: Putative cysteine proteinase inhibitor 7 (117 aa).

A signal peptide spans 1 to 24 (MTMRTSSLLLAAVAVVAIVAGATA). The region spanning 28 to 84 (GSWEPVDINDPHVQELGRWAVAEEDRGVAAGGLTFERVTDGEKQVVAGVNYRLTLEA) is the Cystatin domain. The short motif at 71–75 (QVVAG) is the Secondary area of contact element.

The protein belongs to the cystatin family. Phytocystatin subfamily.

The protein resides in the secreted. In terms of biological role, specific inhibitor of cysteine proteinases. Probably involved in the regulation of endogenous processes and in defense against pests and pathogens. The chain is Putative cysteine proteinase inhibitor 7 from Oryza sativa subsp. japonica (Rice).